The chain runs to 236 residues: 2,3,4,5-tetrahydropyridine-2,6-dicarboxylate N-acetyltransferase (236 aa).

This sequence belongs to the transferase hexapeptide repeat family. DapH subfamily.

The catalysed reaction is (S)-2,3,4,5-tetrahydrodipicolinate + acetyl-CoA + H2O = L-2-acetamido-6-oxoheptanedioate + CoA. The protein operates within amino-acid biosynthesis; L-lysine biosynthesis via DAP pathway; LL-2,6-diaminopimelate from (S)-tetrahydrodipicolinate (acetylase route): step 1/3. Its function is as follows. Catalyzes the transfer of an acetyl group from acetyl-CoA to tetrahydrodipicolinate. The sequence is that of 2,3,4,5-tetrahydropyridine-2,6-dicarboxylate N-acetyltransferase from Listeria ivanovii.